The chain runs to 212 residues: Protein GET1 (212 aa).

The Lumenal portion of the chain corresponds to 1 to 4 (MASL). The helical transmembrane segment at 5–24 (LLFVLVIQIITYLINTIGAR) threads the bilayer. The Cytoplasmic portion of the chain corresponds to 25–110 (TIDSLLWLLY…SFDWTIKTVR (86 aa)). Positions 75-99 (AKLRRRHDKAMEEYDVKNKKLSALK) form a coiled coil. Residues 111-131 (WVSTTGVTVILQFWFSKSPIF) form a helical membrane-spanning segment. Residues 132-155 (DLPRGWLPWQVEWILSFPRAPLGT) are Lumenal-facing. Residues 156–172 (VSIQVWGGACGTVIALV) traverse the membrane as a helical segment. The Cytoplasmic portion of the chain corresponds to 173–212 (GGAMGVAAPAFKKINQPRGEAQKMGTPRGSREQTPVRKTQ). The tract at residues 189-212 (PRGEAQKMGTPRGSREQTPVRKTQ) is disordered. Positions 201–212 (GSREQTPVRKTQ) are enriched in basic and acidic residues.

This sequence belongs to the WRB/GET1 family. Interacts with GET3.

Its subcellular location is the endoplasmic reticulum membrane. Its function is as follows. Required for the post-translational delivery of tail-anchored (TA) proteins to the endoplasmic reticulum. Acts as a membrane receptor for soluble GET3, which recognizes and selectively binds the transmembrane domain of TA proteins in the cytosol. The chain is Protein GET1 from Arthroderma otae (strain ATCC MYA-4605 / CBS 113480) (Microsporum canis).